Consider the following 568-residue polypeptide: Proline--tRNA ligase (568 aa).

Belongs to the class-II aminoacyl-tRNA synthetase family. ProS type 1 subfamily. As to quaternary structure, homodimer.

The protein resides in the cytoplasm. It catalyses the reaction tRNA(Pro) + L-proline + ATP = L-prolyl-tRNA(Pro) + AMP + diphosphate. Its function is as follows. Catalyzes the attachment of proline to tRNA(Pro) in a two-step reaction: proline is first activated by ATP to form Pro-AMP and then transferred to the acceptor end of tRNA(Pro). As ProRS can inadvertently accommodate and process non-cognate amino acids such as alanine and cysteine, to avoid such errors it has two additional distinct editing activities against alanine. One activity is designated as 'pretransfer' editing and involves the tRNA(Pro)-independent hydrolysis of activated Ala-AMP. The other activity is designated 'posttransfer' editing and involves deacylation of mischarged Ala-tRNA(Pro). The misacylated Cys-tRNA(Pro) is not edited by ProRS. The chain is Proline--tRNA ligase from Aliarcobacter butzleri (strain RM4018) (Arcobacter butzleri).